We begin with the raw amino-acid sequence, 400 residues long: Tryptophan synthase beta chain (400 aa).

Lysine 90 is modified (N6-(pyridoxal phosphate)lysine).

This sequence belongs to the TrpB family. In terms of assembly, tetramer of two alpha and two beta chains. The cofactor is pyridoxal 5'-phosphate.

It catalyses the reaction (1S,2R)-1-C-(indol-3-yl)glycerol 3-phosphate + L-serine = D-glyceraldehyde 3-phosphate + L-tryptophan + H2O. It participates in amino-acid biosynthesis; L-tryptophan biosynthesis; L-tryptophan from chorismate: step 5/5. The beta subunit is responsible for the synthesis of L-tryptophan from indole and L-serine. This is Tryptophan synthase beta chain from Bacillus velezensis (strain DSM 23117 / BGSC 10A6 / LMG 26770 / FZB42) (Bacillus amyloliquefaciens subsp. plantarum).